Consider the following 407-residue polypeptide: UDP-N-acetyl-D-mannosamine dehydrogenase (407 aa).

It belongs to the UDP-glucose/GDP-mannose dehydrogenase family.

It carries out the reaction UDP-N-acetyl-alpha-D-mannosamine + 2 NAD(+) + H2O = UDP-N-acetyl-alpha-D-mannosaminouronate + 2 NADH + 3 H(+). It participates in capsule biogenesis; capsule polysaccharide biosynthesis. Dehydrogenase involved in the biosynthesis of capsular polysaccharides. Catalyzes the NAD(+)-dependent oxidation of UDP-N-acetyl-D-mannosamine (UDP-ManNAc) to UDP-N-acetyl-D-mannosaminuronic acid (UDP-ManNAcA). The sequence is that of UDP-N-acetyl-D-mannosamine dehydrogenase from Campylobacter jejuni.